We begin with the raw amino-acid sequence, 344 residues long: Glycerol-3-phosphate dehydrogenase [NAD(P)+] (344 aa).

The NADPH site is built by S11, W12, H32, R33, and K105. The sn-glycerol 3-phosphate site is built by K105, G135, and S137. A139 is a binding site for NADPH. Positions 190, 243, 253, 254, and 255 each coordinate sn-glycerol 3-phosphate. The active-site Proton acceptor is the K190. R254 contacts NADPH. Residues V278 and E280 each contribute to the NADPH site.

The protein belongs to the NAD-dependent glycerol-3-phosphate dehydrogenase family.

Its subcellular location is the cytoplasm. It carries out the reaction sn-glycerol 3-phosphate + NAD(+) = dihydroxyacetone phosphate + NADH + H(+). The enzyme catalyses sn-glycerol 3-phosphate + NADP(+) = dihydroxyacetone phosphate + NADPH + H(+). It functions in the pathway membrane lipid metabolism; glycerophospholipid metabolism. Its function is as follows. Catalyzes the reduction of the glycolytic intermediate dihydroxyacetone phosphate (DHAP) to sn-glycerol 3-phosphate (G3P), the key precursor for phospholipid synthesis. The protein is Glycerol-3-phosphate dehydrogenase [NAD(P)+] of Oceanobacillus iheyensis (strain DSM 14371 / CIP 107618 / JCM 11309 / KCTC 3954 / HTE831).